Consider the following 298-residue polypeptide: ADP-ribosylation factor GTPase-activating protein effector protein 2 (298 aa).

At serine 2 the chain carries N-acetylserine. The region spanning 8-130 (KKALSALLRD…KWIGDLSSIE (123 aa)) is the Arf-GAP domain. A C4-type zinc finger spans residues 23-47 (CADCKAQLHPRWASWSLGVFICIKC). The interval 137–180 (EPVLHKPSANHSLPASNARLDQSSNSLQKTQTQPPSHLLSTSRS) is disordered. The span at 145–171 (ANHSLPASNARLDQSSNSLQKTQTQPP) shows a compositional bias: polar residues. Serine 180, serine 183, and serine 207 each carry phosphoserine.

It is found in the cytoplasm. The protein resides in the golgi apparatus. In terms of biological role, GTPase-activating protein for the ADP ribosylation factor family. This is ADP-ribosylation factor GTPase-activating protein effector protein 2 (AGE2) from Saccharomyces cerevisiae (strain ATCC 204508 / S288c) (Baker's yeast).